The chain runs to 489 residues: Potassium voltage-gated channel subfamily A member 7 (489 aa).

Residues 176 to 196 (VLAVVSVLVILVSIVVFCLET) traverse the membrane as a helical segment. N-linked (GlcNAc...) asparagine glycosylation is present at Asn224. Residues 242-262 (FFVVETLCICWFSFELLVRLV) form a helical membrane-spanning segment. Cys264 carries S-palmitoyl cysteine lipidation. A helical membrane pass occupies residues 274–294 (VMNLIDFVAILPYFVALGTEL). A helical; Voltage-sensor transmembrane segment spans residues 309–328 (ILRVIRLVRVFRIFKLSRHS). The helical transmembrane segment at 345-365 (LGLLIFFLFIGVVLFSSAVYF) threads the bilayer. The Selectivity filter motif lies at 391–396 (TVGYGD). A helical membrane pass occupies residues 406–426 (IVGSLCAIAGVLTISLPVPVI).

Belongs to the potassium channel family. A (Shaker) (TC 1.A.1.2) subfamily. Kv1.7/KCNA7 sub-subfamily. In terms of assembly, heterotetramer of potassium channel proteins. Detected in heart, skeletal muscle, brain, and pancreatic islet cells.

It is found in the membrane. The catalysed reaction is K(+)(in) = K(+)(out). Functionally, mediates the voltage-dependent potassium ion permeability of excitable membranes. Assuming opened or closed conformations in response to the voltage difference across the membrane, the protein forms a potassium-selective channel through which potassium ions may pass in accordance with their electrochemical gradient. Channels formed by isoform 1 inactivate faster than channels formed by isoform 2. The protein is Potassium voltage-gated channel subfamily A member 7 (Kcna7) of Mus musculus (Mouse).